We begin with the raw amino-acid sequence, 810 residues long: Lon protease (810 aa).

Positions 40–233 (LIIVPVRGFV…MVAKLLAQRI (194 aa)) constitute a Lon N-terminal domain. An ATP-binding site is contributed by 385–392 (GPPGVGKT). A Lon proteolytic domain is found at 621 to 802 (LSVPGVATGL…DDAMAAAFEG (182 aa)). Active-site residues include Ser708 and Lys751.

The protein belongs to the peptidase S16 family. In terms of assembly, homohexamer. Organized in a ring with a central cavity.

Its subcellular location is the cytoplasm. It carries out the reaction Hydrolysis of proteins in presence of ATP.. In terms of biological role, ATP-dependent serine protease that mediates the selective degradation of mutant and abnormal proteins as well as certain short-lived regulatory proteins. Required for cellular homeostasis and for survival from DNA damage and developmental changes induced by stress. Degrades polypeptides processively to yield small peptide fragments that are 5 to 10 amino acids long. Binds to DNA in a double-stranded, site-specific manner. The polypeptide is Lon protease (Methylocella silvestris (strain DSM 15510 / CIP 108128 / LMG 27833 / NCIMB 13906 / BL2)).